Reading from the N-terminus, the 431-residue chain is FAD-dependent monooxygenase nodY1 (431 aa).

Residues 1 to 21 form the signal peptide; the sequence is MASTGVSVIVVGLGLAGLTTA. The FAD site is built by glutamate 35 and arginine 110. Residue arginine 188 is part of the active site. Residue aspartate 313 coordinates FAD.

This sequence belongs to the paxM FAD-dependent monooxygenase family. The cofactor is FAD.

The protein operates within secondary metabolite biosynthesis. FAD-dependent monooxygenase; part of the gene cluster that mediates the biosynthesis of the indole diterpenes nodulisporic acids (NA). Nodulisporic acid A (NAA) and its chemically modified derivatives are of particular significance because of their highly potent insecticidal activity against blood-feeding arthropods and lack of observable adverse effects on mammals, in particular the tremogenicity associated with the paspaline-derived IDTs is not observed. The geranylgeranyl diphosphate (GGPP) synthase ggs1, localized outside of the cluster, is proposed to catalyze the first step in nodulisporic acid biosynthesis via conversion of farnesyl pyrophosphate and isopentyl pyrophosphate into geranylgeranyl pyrophosphate (GGPP). Condensation of indole-3-glycerol phosphate with GGPP by the prenyl transferase nodC then forms 3-geranylgeranylindole (3-GGI). Epoxidation by the FAD-dependent monooxygenase nodM leads to a single-epoxidized-GGI that is substrate of the terpene cyclase nodB for cyclization to yield emindole SB. The terminal methyl carbon, C28, of emindole SB is then oxidized by the cytochrome P450 monooxygenase nodW to produce nodulisporic acid F (NAF), the pentacyclic core of NAA. NAF is converted to nodulisporic acid E (NAE) via prenylation. This step is probably performed by one of the indole diterpene prenyltransferases nodD1 or nodD2. Several oxidation steps performed by the FAD-linked oxidoreductase nodO and one of the cytochrome P450 monooxygenase nodR, nodX or nodZ further convert NAE to nodulisporic acid D (NAD). NAD is substrate of cytochrome P450 monooxygenase nodJ to produce the precursor of nodulisporic acid C (NAC), converted to NAC by one of the indole diterpene prenyltransferases nodD1 or nodD2. The FAD-dependent monooxygenase nodY2 then oxidizes NAC to nodulisporic acid B (NAB). Finally NAB is converted to NAA by one of the cytochrome P450 monooxygenases nodR, nodX or nodZ. The protein is FAD-dependent monooxygenase nodY1 of Hypoxylon pulicicidum.